We begin with the raw amino-acid sequence, 87 residues long: Small ribosomal subunit protein bS16c (87 aa).

The protein belongs to the bacterial ribosomal protein bS16 family.

It is found in the plastid. It localises to the chloroplast. The chain is Small ribosomal subunit protein bS16c from Zygnema circumcarinatum (Green alga).